Consider the following 516-residue polypeptide: Bifunctional purine biosynthesis protein PurH (516 aa).

Positions 1–146 constitute an MGS-like domain; the sequence is MAPFALLSVS…KNHADVAVLT (146 aa).

The protein belongs to the PurH family.

It catalyses the reaction (6R)-10-formyltetrahydrofolate + 5-amino-1-(5-phospho-beta-D-ribosyl)imidazole-4-carboxamide = 5-formamido-1-(5-phospho-D-ribosyl)imidazole-4-carboxamide + (6S)-5,6,7,8-tetrahydrofolate. The enzyme catalyses IMP + H2O = 5-formamido-1-(5-phospho-D-ribosyl)imidazole-4-carboxamide. Its pathway is purine metabolism; IMP biosynthesis via de novo pathway; 5-formamido-1-(5-phospho-D-ribosyl)imidazole-4-carboxamide from 5-amino-1-(5-phospho-D-ribosyl)imidazole-4-carboxamide (10-formyl THF route): step 1/1. It functions in the pathway purine metabolism; IMP biosynthesis via de novo pathway; IMP from 5-formamido-1-(5-phospho-D-ribosyl)imidazole-4-carboxamide: step 1/1. This Parasynechococcus marenigrum (strain WH8102) protein is Bifunctional purine biosynthesis protein PurH.